A 110-amino-acid polypeptide reads, in one-letter code: Membrane-associated protein slr1513 (110 aa).

Its subcellular location is the cellular thylakoid membrane. The protein localises to the cell membrane. The polypeptide is Membrane-associated protein slr1513 (Synechocystis sp. (strain ATCC 27184 / PCC 6803 / Kazusa)).